A 102-amino-acid chain; its full sequence is NADH-quinone oxidoreductase subunit K (102 aa).

A run of 3 helical transmembrane segments spans residues L5–V25, I31–F51, and F66–F86.

This sequence belongs to the complex I subunit 4L family. NDH-1 is composed of 14 different subunits. Subunits NuoA, H, J, K, L, M, N constitute the membrane sector of the complex.

It is found in the cellular chromatophore membrane. It carries out the reaction a quinone + NADH + 5 H(+)(in) = a quinol + NAD(+) + 4 H(+)(out). Its function is as follows. NDH-1 shuttles electrons from NADH, via FMN and iron-sulfur (Fe-S) centers, to quinones in the respiratory chain. The immediate electron acceptor for the enzyme in this species is believed to be ubiquinone. Couples the redox reaction to proton translocation (for every two electrons transferred, four hydrogen ions are translocated across the cytoplasmic membrane), and thus conserves the redox energy in a proton gradient. This chain is NADH-quinone oxidoreductase subunit K, found in Rhodobacter capsulatus (Rhodopseudomonas capsulata).